We begin with the raw amino-acid sequence, 479 residues long: MNIETLFPLDPNVKVRTRFAPSPTGYLHVGGARTALSSWLYAKHFNGEFVLRIEDTDLERSTPEATAAILEGMEWLNLAWEHGPYYQTKRFDRYNQVIDQMIEQGLAYRCYCSKERLENLRHEQEANKEKPRYDRHCLAHHDQPTDAPHVVRFKNPQEGSVVFDDAVRGRIEISNSELDDLIIRRTDGSPTYNFCVVVDDWDMGITHVVRGEDHINNTPRQINILKALGAPIPTYAHVSMINGDDGQKLSKRHGAVSVMQYRDDGYLPEALINYLVRLGWGHGDQEIFSREEMIELFDIHSVSKSASAFNTDKLQWLNQHYMRSLPAEHVAKYLAWHMNDQAIDTSSGPALEEIIPVLSERAKTLKELAAASRYFYQEFDGYDEKAAAKNFKAEAVAPLAKLLEKLTALTDWSVEAIHDAMNATAADLEIGMGKVGMPFRLAVTGSGQSPSMDITAKLVGRERTLARIQKAIEFIQAQA.

The 'HIGH' region signature appears at 21–31 (PSPTGYLHVGG). The short motif at 248-252 (KLSKR) is the 'KMSKS' region element. Lys251 contacts ATP.

Belongs to the class-I aminoacyl-tRNA synthetase family. Glutamate--tRNA ligase type 1 subfamily. Monomer.

The protein resides in the cytoplasm. It catalyses the reaction tRNA(Glu) + L-glutamate + ATP = L-glutamyl-tRNA(Glu) + AMP + diphosphate. In terms of biological role, catalyzes the attachment of glutamate to tRNA(Glu) in a two-step reaction: glutamate is first activated by ATP to form Glu-AMP and then transferred to the acceptor end of tRNA(Glu). This Actinobacillus pleuropneumoniae serotype 5b (strain L20) protein is Glutamate--tRNA ligase.